A 442-amino-acid chain; its full sequence is D-serine dehydratase (442 aa).

N6-(pyridoxal phosphate)lysine is present on Lys-118.

The protein belongs to the serine/threonine dehydratase family. DsdA subfamily. As to quaternary structure, monomer. Pyridoxal 5'-phosphate serves as cofactor.

The catalysed reaction is D-serine = pyruvate + NH4(+). In Shigella flexneri serotype 5b (strain 8401), this protein is D-serine dehydratase.